Consider the following 591-residue polypeptide: Aspartate--tRNA(Asp/Asn) ligase (591 aa).

Glutamate 176 contacts L-aspartate. An aspartate region spans residues 200-203; that stretch reads QLFK. Arginine 222 is a binding site for L-aspartate. Residues 222–224 and glutamine 231 each bind ATP; that span reads RDE. L-aspartate is bound at residue histidine 450. Glutamate 484 contacts ATP. L-aspartate is bound at residue arginine 491. 536–539 lines the ATP pocket; that stretch reads GLDR.

This sequence belongs to the class-II aminoacyl-tRNA synthetase family. Type 1 subfamily. In terms of assembly, homodimer.

Its subcellular location is the cytoplasm. The enzyme catalyses tRNA(Asx) + L-aspartate + ATP = L-aspartyl-tRNA(Asx) + AMP + diphosphate. Aspartyl-tRNA synthetase with relaxed tRNA specificity since it is able to aspartylate not only its cognate tRNA(Asp) but also tRNA(Asn). Reaction proceeds in two steps: L-aspartate is first activated by ATP to form Asp-AMP and then transferred to the acceptor end of tRNA(Asp/Asn). The chain is Aspartate--tRNA(Asp/Asn) ligase from Bacillus cereus (strain ATCC 10987 / NRS 248).